Consider the following 304-residue polypeptide: uncharacterized protein (304 aa).

Residues 1–22 (MKKSLTLLILLLCSLLFSTVLS) form the signal peptide. The interval 91–111 (PAPAPTPESSDPDEPMKPDDS) is disordered. 4 N-linked (GlcNAc...) asparagine glycosylation sites follow: Asn-133, Asn-160, Asn-183, and Asn-233. Ser-282 carries the GPI-anchor amidated serine lipid modification. The propeptide at 283–304 (SSHLFGVLPFLPLVLCIFLFLL) is removed in mature form.

It is found in the cell membrane. This is an uncharacterized protein from Arabidopsis thaliana (Mouse-ear cress).